The following is a 1208-amino-acid chain: DNA-directed RNA polymerase subunit beta (1208 aa).

The protein belongs to the RNA polymerase beta chain family. The RNAP catalytic core consists of 2 alpha, 1 beta, 1 beta' and 1 omega subunit. When a sigma factor is associated with the core the holoenzyme is formed, which can initiate transcription.

It carries out the reaction RNA(n) + a ribonucleoside 5'-triphosphate = RNA(n+1) + diphosphate. Its function is as follows. DNA-dependent RNA polymerase catalyzes the transcription of DNA into RNA using the four ribonucleoside triphosphates as substrates. The sequence is that of DNA-directed RNA polymerase subunit beta from Enterococcus faecium (Streptococcus faecium).